A 290-amino-acid polypeptide reads, in one-letter code: 4-hydroxybenzoate octaprenyltransferase (290 aa).

Transmembrane regions (helical) follow at residues 23-43 (IGAL…TPGV), 46-66 (LWIL…GCVV), 99-119 (LFVV…TMTI), 141-161 (LPQV…FAAV), 163-183 (ESVP…AVAY), 213-233 (LIIG…GELN), 234-254 (GLGW…VYQQ), and 268-288 (AFMN…MSYW).

This sequence belongs to the UbiA prenyltransferase family. Requires Mg(2+) as cofactor.

The protein localises to the cell inner membrane. It carries out the reaction all-trans-octaprenyl diphosphate + 4-hydroxybenzoate = 4-hydroxy-3-(all-trans-octaprenyl)benzoate + diphosphate. It functions in the pathway cofactor biosynthesis; ubiquinone biosynthesis. Catalyzes the prenylation of para-hydroxybenzoate (PHB) with an all-trans polyprenyl group. Mediates the second step in the final reaction sequence of ubiquinone-8 (UQ-8) biosynthesis, which is the condensation of the polyisoprenoid side chain with PHB, generating the first membrane-bound Q intermediate 3-octaprenyl-4-hydroxybenzoate. This Escherichia coli (strain SE11) protein is 4-hydroxybenzoate octaprenyltransferase.